A 556-amino-acid polypeptide reads, in one-letter code: Formate--tetrahydrofolate ligase (556 aa).

65–72 lines the ATP pocket; the sequence is TSAGEGKT.

Belongs to the formate--tetrahydrofolate ligase family.

The enzyme catalyses (6S)-5,6,7,8-tetrahydrofolate + formate + ATP = (6R)-10-formyltetrahydrofolate + ADP + phosphate. Its pathway is one-carbon metabolism; tetrahydrofolate interconversion. This is Formate--tetrahydrofolate ligase from Kosmotoga olearia (strain ATCC BAA-1733 / DSM 21960 / TBF 19.5.1).